We begin with the raw amino-acid sequence, 191 residues long: NF-kappa-B inhibitor-interacting Ras-like protein 2 (191 aa).

The small GTPase-like stretch occupies residues 1–191; sequence MGKSCKVVVC…KNKGSGSLDG (191 aa). Position 11-18 (11-18) interacts with GTP; that stretch reads GQASVGKT. The Effector region motif lies at 35–43; the sequence is MIETQEDIY. GTP is bound by residues 61–65 and 120–123; these read DTRGL and NKCD. The segment at 169-191 is disordered; it reads TQPQSKSAFPLSRKNKGSGSLDG.

This sequence belongs to the small GTPase superfamily. Ras family. KappaB-Ras subfamily. Interacts with both NF-kappa-B inhibitor alpha (NFKBIA) and beta (NFKBIB) in vitro. However, it probably only interacts with NFKBIB in vivo. Interacts with GFOD1. In terms of tissue distribution, widely expressed.

The protein resides in the cytoplasm. Atypical Ras-like protein that acts as a potent regulator of NF-kappa-B activity by preventing the degradation of NF-kappa-B inhibitor beta (NFKBIB) by most signals, explaining why NFKBIB is more resistant to degradation. May act by blocking phosphorylation of NFKBIB and nuclear localization of p65/RELA NF-kappa-B subunit. It is unclear whether it acts as a GTPase. Both GTP- and GDP-bound forms block phosphorylation of NFKBIB. This is NF-kappa-B inhibitor-interacting Ras-like protein 2 (NKIRAS2) from Homo sapiens (Human).